Consider the following 355-residue polypeptide: Protein pelota homolog (355 aa).

This sequence belongs to the eukaryotic release factor 1 family. Pelota subfamily. In terms of assembly, monomer. A divalent metal cation serves as cofactor.

The protein localises to the cytoplasm. In terms of biological role, may function in recognizing stalled ribosomes, interact with stem-loop structures in stalled mRNA molecules, and effect endonucleolytic cleavage of the mRNA. May play a role in the release non-functional ribosomes and degradation of damaged mRNAs. Has endoribonuclease activity. This is Protein pelota homolog from Halorubrum lacusprofundi (strain ATCC 49239 / DSM 5036 / JCM 8891 / ACAM 34).